The following is a 145-amino-acid chain: Large ribosomal subunit protein uL13 (145 aa).

Belongs to the universal ribosomal protein uL13 family. As to quaternary structure, part of the 50S ribosomal subunit.

This protein is one of the early assembly proteins of the 50S ribosomal subunit, although it is not seen to bind rRNA by itself. It is important during the early stages of 50S assembly. The sequence is that of Large ribosomal subunit protein uL13 from Geobacillus kaustophilus (strain HTA426).